Here is a 31-residue protein sequence, read N- to C-terminus: Cytochrome b6-f complex subunit 6 (31 aa).

Residues Ile4 to Asn26 form a helical membrane-spanning segment.

Belongs to the PetL family. As to quaternary structure, the 4 large subunits of the cytochrome b6-f complex are cytochrome b6, subunit IV (17 kDa polypeptide, PetD), cytochrome f and the Rieske protein, while the 4 small subunits are PetG, PetL, PetM and PetN. The complex functions as a dimer.

The protein localises to the plastid. The protein resides in the chloroplast thylakoid membrane. Its function is as follows. Component of the cytochrome b6-f complex, which mediates electron transfer between photosystem II (PSII) and photosystem I (PSI), cyclic electron flow around PSI, and state transitions. PetL is important for photoautotrophic growth as well as for electron transfer efficiency and stability of the cytochrome b6-f complex. This Dioscorea elephantipes (Elephant's foot yam) protein is Cytochrome b6-f complex subunit 6.